The sequence spans 199 residues: Protein p2 (199 aa).

The protein resides in the host cytoplasm. The polypeptide is Protein p2 (Avena sativa (Oat)).